The following is a 609-amino-acid chain: Transcription factor ntnD (609 aa).

Positions 1–7 (MCVGIEC) form a DNA-binding region, zn(2)-C6 fungal-type. A disordered region spans residues 46–104 (FRDQNESSLNRIHNRRTSNSQPSTRSINNTTTIPASNNEPLALSQPPSASSQNQVEKDQ). Residues 51-84 (ESSLNRIHNRRTSNSQPSTRSINNTTTIPASNNE) show a composition bias toward polar residues. The span at 85–97 (PLALSQPPSASSQ) shows a compositional bias: low complexity.

It belongs to the TRI10 transcription regulator family.

It is found in the nucleus. Its function is as follows. Transcription factor; part of the gene cluster that mediates the biosynthesis of meroterpenoids. The sequence is that of Transcription factor ntnD from Nectria sp.